A 138-amino-acid polypeptide reads, in one-letter code: Protein Rrf1 (138 aa).

One can recognise a Response regulatory domain in the interval 4–116 (RILVVQEDPD…LLLALVDRAL (113 aa)). 4-aspartylphosphate is present on residues Asp-13 and Asp-53.

Its function is as follows. May be involved in regulation of gene transcription. Belongs to the family of response regulators, and members of this family involved in the regulation of gene transcription are two-domain proteins. This protein contains only the N-terminal phosphorylation domain and not the C-terminal DNA-binding domain but it may bind to Rrf2 protein and the latter may bind to DNA. The sequence is that of Protein Rrf1 (rrf1) from Nitratidesulfovibrio vulgaris (strain ATCC 29579 / DSM 644 / CCUG 34227 / NCIMB 8303 / VKM B-1760 / Hildenborough) (Desulfovibrio vulgaris).